Consider the following 123-residue polypeptide: Neuropeptide-like peptides nlp-40 (123 aa).

A signal peptide spans 1 to 17; that stretch reads MKLVILLSFVATVAVFA. 3 propeptides span residues 30–31, 66–67, and 75–76; these read RA and KR.

Expressed in intestinal cells.

The protein localises to the secreted. It is found in the cytoplasmic vesicle. In terms of biological role, neuropeptide ligand for the G-protein coupled receptor aex-2. Activates and regulates the rhythmic calcium influx in DVB GABergic neurons during the defecation motor program, which is a coordinated series of three muscle contractions that occurs every 45 seconds. The sequence is that of Neuropeptide-like peptides nlp-40 from Caenorhabditis elegans.